Reading from the N-terminus, the 259-residue chain is Cell division protein DivIB (259 aa).

At 1–27 (MADGKVIDIEQKVPDFREQRRRKSRRR) the chain is on the cytoplasmic side. The helical transmembrane segment at 28–45 (LVLYISILAFFLLFVYYF) threads the bilayer. Topologically, residues 46 to 259 (QSDYSTVGHV…QEEEEIEIEE (214 aa)) are extracellular. The 69-residue stretch at 50 to 118 (STVGHVDVYG…RSITLYVDEY (69 aa)) folds into the POTRA domain.

This sequence belongs to the FtsQ/DivIB family. DivIB subfamily.

The protein resides in the cell membrane. Cell division protein that may be involved in stabilizing or promoting the assembly of the division complex. This is Cell division protein DivIB from Bacillus selenitireducens (strain ATCC 700615 / DSM 15326 / MLS10).